The following is a 229-amino-acid chain: 2,3-bisphosphoglycerate-dependent phosphoglycerate mutase (229 aa).

Substrate contacts are provided by residues 8–15 (RHGKSEWN), 21–22 (TG), R60, 87–90 (ERHY), K98, 114–115 (RR), and 183–184 (GN). H9 serves as the catalytic Tele-phosphohistidine intermediate. Residue E87 is the Proton donor/acceptor of the active site.

The protein belongs to the phosphoglycerate mutase family. BPG-dependent PGAM subfamily. As to quaternary structure, homodimer.

The enzyme catalyses (2R)-2-phosphoglycerate = (2R)-3-phosphoglycerate. It participates in carbohydrate degradation; glycolysis; pyruvate from D-glyceraldehyde 3-phosphate: step 3/5. Catalyzes the interconversion of 2-phosphoglycerate and 3-phosphoglycerate. This Nautilia profundicola (strain ATCC BAA-1463 / DSM 18972 / AmH) protein is 2,3-bisphosphoglycerate-dependent phosphoglycerate mutase.